Consider the following 364-residue polypeptide: D-alanine--D-alanine ligase (364 aa).

An ATP-grasp domain is found at 134–344 (KVLLKSFNIP…YESLVDKLIT (211 aa)). 167 to 222 (NNKLNYPVIVKPSVLGSSIGINVAYNVSQIEKYIEEAFEYDLTVVVEKFIKAREIE) contributes to the ATP binding site. The Mg(2+) site is built by Asp297, Glu311, and Asn313.

Belongs to the D-alanine--D-alanine ligase family. Mg(2+) is required as a cofactor. Mn(2+) serves as cofactor.

It localises to the cytoplasm. The catalysed reaction is 2 D-alanine + ATP = D-alanyl-D-alanine + ADP + phosphate + H(+). It participates in cell wall biogenesis; peptidoglycan biosynthesis. Its function is as follows. Cell wall formation. The sequence is that of D-alanine--D-alanine ligase from Borrelia duttonii (strain Ly).